The chain runs to 397 residues: Purine nucleoside transport protein NupG (397 aa).

Helical transmembrane passes span 1–21 (MYFL…FLCS), 32–52 (IITL…TKVG), 62–82 (FFTW…PSVM), 97–117 (IIFI…PWLI), 133–153 (LESF…LAVI), 165–185 (LLTF…GSYL), 187–207 (MVPA…ALII), 242–262 (MLVG…YVAL), 282–302 (IFAY…HDAM), 335–355 (VAVA…GMIY), and 377–397 (LLVS…LFVW).

Belongs to the concentrative nucleoside transporter (CNT) (TC 2.A.41) family.

It is found in the cell membrane. In terms of biological role, involved in the uptake of the purine ribonucleosides inosine and guanosine. The sequence is that of Purine nucleoside transport protein NupG (nupG) from Bacillus subtilis (strain 168).